A 335-amino-acid chain; its full sequence is Urokinase plasminogen activator surface receptor (335 aa).

Residues 1–22 (MGHPLLLPLLLLLHTCVPASWG) form the signal peptide. 3 consecutive UPAR/Ly6 domains span residues 23 to 114 (LRCM…RSRY), 115 to 213 (LECI…PQNG), and 214 to 305 (HQCY…YRKG). 3 disulfide bridges follow: cysteine 25-cysteine 46, cysteine 28-cysteine 34, and cysteine 39-cysteine 67. Asparagine 74 is a glycosylation site (N-linked (GlcNAc...) asparagine). 11 disulfides stabilise this stretch: cysteine 93-cysteine 98, cysteine 117-cysteine 144, cysteine 120-cysteine 127, cysteine 137-cysteine 169, cysteine 175-cysteine 192, cysteine 193-cysteine 198, cysteine 216-cysteine 244, cysteine 219-cysteine 227, cysteine 237-cysteine 263, cysteine 269-cysteine 287, and cysteine 288-cysteine 293. N-linked (GlcNAc...) asparagine glycosylation is found at asparagine 184, asparagine 194, asparagine 222, asparagine 255, and asparagine 284. Glycine 305 is lipidated: GPI-anchor amidated glycine. The propeptide at 306–335 (AAPQPGPAHLSLTITLLMTARLWGGTLLWT) is removed in mature form.

In terms of assembly, monomer. Interacts (via the UPAR/Ly6 domains) with SRPX2. Interacts with MRC2. Interacts with FAP (seprase); the interaction occurs at the cell surface of invadopodia membrane. Interacts with SORL1 (via N-terminal ectodomain); this interaction decreases PLAUR internalization. The ternary complex composed of PLAUR-PLAU-SERPINE1 also interacts with SORL1.

It is found in the cell membrane. The protein localises to the cell projection. Its subcellular location is the invadopodium membrane. Acts as a receptor for urokinase plasminogen activator. Plays a role in localizing and promoting plasmin formation. Mediates the proteolysis-independent signal transduction activation effects of U-PA. It is subject to negative-feedback regulation by U-PA which cleaves it into an inactive form. The sequence is that of Urokinase plasminogen activator surface receptor (PLAUR) from Macaca fascicularis (Crab-eating macaque).